The primary structure comprises 586 residues: Phosphomethylpyrimidine synthase (586 aa).

The disordered stretch occupies residues 1-59; it reads MKQSVSAEQIELKSSLPGSKKVYVDGPREGMKVPMREIEQSDTNGVPNPPIRVYDTSGP. Positions 22-39 are enriched in basic and acidic residues; it reads VYVDGPREGMKVPMREIE. Residues Asn-193, Met-222, Tyr-251, His-287, 307–309, 348–351, and Glu-387 contribute to the substrate site; these read SRG and DGLR. His-391 contributes to the Zn(2+) binding site. Tyr-414 lines the substrate pocket. Position 455 (His-455) interacts with Zn(2+). Positions 535, 538, and 543 each coordinate [4Fe-4S] cluster.

The protein belongs to the ThiC family. [4Fe-4S] cluster is required as a cofactor.

It catalyses the reaction 5-amino-1-(5-phospho-beta-D-ribosyl)imidazole + S-adenosyl-L-methionine = 4-amino-2-methyl-5-(phosphooxymethyl)pyrimidine + CO + 5'-deoxyadenosine + formate + L-methionine + 3 H(+). Its pathway is cofactor biosynthesis; thiamine diphosphate biosynthesis. In terms of biological role, catalyzes the synthesis of the hydroxymethylpyrimidine phosphate (HMP-P) moiety of thiamine from aminoimidazole ribotide (AIR) in a radical S-adenosyl-L-methionine (SAM)-dependent reaction. The polypeptide is Phosphomethylpyrimidine synthase (Bacillus cereus (strain ZK / E33L)).